Consider the following 333-residue polypeptide: MALACTDSANSTFSRVDSPTSGPSDQLTTHDLDRHIEKLMRCELIAEQDVKTLCAKAREILAEEGNVQVIDSPVTICGDIHGQFYDLMELFKVGGPVPNTNYLFLGDFVDRGFYSVETFLLLLALKARYPDRMMLIRGNHESRQITQVYGFYDECLRKYGNASVWKHCTEVFDYLSLAAVIDGKVFCVHGGLSPSISTMDQIRVIDRKQEVPHDGPMCDLLWSDPEEGNVGWGLSPRGAGYLFGADASKTFCETNGVDLICRAHQLVMEGYKWHFNEKVLTVWSAPNYCYRCGNVAAILELDENLNKEFTIFEAAPQENRGAPAKKPHADYFL.

Residues 1–28 (MALACTDSANSTFSRVDSPTSGPSDQLT) are disordered. Polar residues predominate over residues 7 to 27 (DSANSTFSRVDSPTSGPSDQL). The Mn(2+) site is built by Asp-79, His-81, Asp-107, and Asn-139. Catalysis depends on His-140, which acts as the Proton donor. Mn(2+)-binding residues include His-189 and His-264. Residue Leu-333 is modified to Leucine methyl ester.

The protein belongs to the PPP phosphatase family. PP-4 (PP-X) subfamily. Serine/threonine-protein phosphatase 4 (PP4) occurs in different assemblies of the catalytic and one or more regulatory subunits. The regulatory subunits are likely to be ppfr-1, ppfr-2, ppfr-4 and smk-1. Interacts with mei-1. The cofactor is Mn(2+). In terms of processing, methylation at the C-terminal Leu-333 is critical for interactions with regulatory subunits.

The protein resides in the cytoplasm. The protein localises to the cytoskeleton. Its subcellular location is the microtubule organizing center. It localises to the centrosome. The enzyme catalyses O-phospho-L-seryl-[protein] + H2O = L-seryl-[protein] + phosphate. It carries out the reaction O-phospho-L-threonyl-[protein] + H2O = L-threonyl-[protein] + phosphate. In terms of biological role, protein phosphatase which plays an essential role in meiosis and in early embryonic mitosis. During spermatocyte meiosis and the first embryonic mitosis, regulates centrosome maturation, and thus spindle formation, by recruiting some of the components of the pericentriolar material (PCM). During oocyte meiosis I, regulates meiotic chromosome dynamics including synapsis-independent chromosome pairing, restriction of synapsis to homologous chromosomes, programmed DNA double-strand break initiation and crossover formation resulting in chiasma formation. During oocyte meiosis II and probably together with regulatory subunit ppfr-1, may regulate microtubule severing by dephosphorylating and activating mei-1, a component of the katanin microtubule severing complex. The protein is Serine/threonine-protein phosphatase 4 catalytic subunit 1 of Caenorhabditis elegans.